Reading from the N-terminus, the 350-residue chain is Flap endonuclease 1 (350 aa).

The tract at residues 1–102 (MGVTELGKLI…IEIEKRRRVR (102 aa)) is N-domain. 7 residues coordinate Mg(2+): D31, D84, E156, E158, D177, D179, and D241. Residues 120-263 (EARKYAQRAL…RALRLIQEYG (144 aa)) are I-domain.

This sequence belongs to the XPG/RAD2 endonuclease family. FEN1 subfamily. In terms of assembly, interacts with PCNA. PCNA stimulates the nuclease activity without altering cleavage specificity. Requires Mg(2+) as cofactor.

In terms of biological role, structure-specific nuclease with 5'-flap endonuclease and 5'-3' exonuclease activities involved in DNA replication and repair. During DNA replication, cleaves the 5'-overhanging flap structure that is generated by displacement synthesis when DNA polymerase encounters the 5'-end of a downstream Okazaki fragment. Binds the unpaired 3'-DNA end and kinks the DNA to facilitate 5' cleavage specificity. Cleaves one nucleotide into the double-stranded DNA from the junction in flap DNA, leaving a nick for ligation. Also involved in the base excision repair (BER) pathway. Acts as a genome stabilization factor that prevents flaps from equilibrating into structures that lead to duplications and deletions. Also possesses 5'-3' exonuclease activity on nicked or gapped double-stranded DNA. The polypeptide is Flap endonuclease 1 (Caldivirga maquilingensis (strain ATCC 700844 / DSM 13496 / JCM 10307 / IC-167)).